A 388-amino-acid polypeptide reads, in one-letter code: MKFDGVRPTRVEVYLDAITHNFREIKKIVGKNVKIMAVIKGDAYGHGASYVAKFLEKEGVDYFGVATTEEALELREKGIKTPILIFGYTPPTQLRQIVKHDLTQTVYDIKYAKELEKESLKQNKRAKVHIKIDTGLGRIGYIDFDLAQKEILEMANMRGLILEGIYSHFAAASEDDRDYCKEQFDKFMNLISSLEKKRLKIPLKHIANAAAILNLNYSHLDMVRPGIILFGAYPSKRVERKVELRETLRFTTRVVHLKDVPAGFFIGYGKSFVTKRKSVIATIPVGYADGLDRRLSNNYKLLLKGKYVPIVGRVCMDQCMIDVTDVEGVEIGDEVVIIGTQNNETVSVESMADKIETIPQEVFSRISRRVPRVYFYDGIKIGEVNYLK.

Catalysis depends on Lys40, which acts as the Proton acceptor; specific for D-alanine. Position 40 is an N6-(pyridoxal phosphate)lysine (Lys40). A substrate-binding site is contributed by Arg138. The Proton acceptor; specific for L-alanine role is filled by Tyr268. A substrate-binding site is contributed by Met316.

Belongs to the alanine racemase family. The cofactor is pyridoxal 5'-phosphate.

It carries out the reaction L-alanine = D-alanine. Its pathway is amino-acid biosynthesis; D-alanine biosynthesis; D-alanine from L-alanine: step 1/1. Functionally, catalyzes the interconversion of L-alanine and D-alanine. May also act on other amino acids. This is Alanine racemase 1 (alr1) from Caldanaerobacter subterraneus subsp. tengcongensis (strain DSM 15242 / JCM 11007 / NBRC 100824 / MB4) (Thermoanaerobacter tengcongensis).